A 782-amino-acid polypeptide reads, in one-letter code: Phosphoribosylformylglycinamidine synthase subunit PurL (782 aa).

Residue H50 is part of the active site. The ATP site is built by Y53 and K92. Position 94 (E94) interacts with Mg(2+). Residues 95–98 and R117 contribute to the substrate site; that span reads SHNH. The active-site Proton acceptor is the H96. Position 118 (D118) interacts with Mg(2+). Q241 is a substrate binding site. D269 is a binding site for Mg(2+). A substrate-binding site is contributed by 313–315; the sequence is ESQ. ATP is bound by residues D520 and G557. Mg(2+) is bound at residue N558. Residue S560 coordinates substrate.

The protein belongs to the FGAMS family. In terms of assembly, monomer. Part of the FGAM synthase complex composed of 1 PurL, 1 PurQ and 2 PurS subunits.

It localises to the cytoplasm. It carries out the reaction N(2)-formyl-N(1)-(5-phospho-beta-D-ribosyl)glycinamide + L-glutamine + ATP + H2O = 2-formamido-N(1)-(5-O-phospho-beta-D-ribosyl)acetamidine + L-glutamate + ADP + phosphate + H(+). It participates in purine metabolism; IMP biosynthesis via de novo pathway; 5-amino-1-(5-phospho-D-ribosyl)imidazole from N(2)-formyl-N(1)-(5-phospho-D-ribosyl)glycinamide: step 1/2. Functionally, part of the phosphoribosylformylglycinamidine synthase complex involved in the purines biosynthetic pathway. Catalyzes the ATP-dependent conversion of formylglycinamide ribonucleotide (FGAR) and glutamine to yield formylglycinamidine ribonucleotide (FGAM) and glutamate. The FGAM synthase complex is composed of three subunits. PurQ produces an ammonia molecule by converting glutamine to glutamate. PurL transfers the ammonia molecule to FGAR to form FGAM in an ATP-dependent manner. PurS interacts with PurQ and PurL and is thought to assist in the transfer of the ammonia molecule from PurQ to PurL. The protein is Phosphoribosylformylglycinamidine synthase subunit PurL of Cyanothece sp. (strain PCC 7425 / ATCC 29141).